Reading from the N-terminus, the 418-residue chain is Histidine--tRNA ligase (418 aa).

This sequence belongs to the class-II aminoacyl-tRNA synthetase family. Homodimer.

The protein resides in the cytoplasm. The enzyme catalyses tRNA(His) + L-histidine + ATP = L-histidyl-tRNA(His) + AMP + diphosphate + H(+). The sequence is that of Histidine--tRNA ligase from Thermoanaerobacter pseudethanolicus (strain ATCC 33223 / 39E) (Clostridium thermohydrosulfuricum).